Here is a 368-residue protein sequence, read N- to C-terminus: Peptide chain release factor 2 (368 aa).

N5-methylglutamine is present on Gln250.

The protein belongs to the prokaryotic/mitochondrial release factor family. In terms of processing, methylated by PrmC. Methylation increases the termination efficiency of RF2.

It localises to the cytoplasm. Its function is as follows. Peptide chain release factor 2 directs the termination of translation in response to the peptide chain termination codons UGA and UAA. The protein is Peptide chain release factor 2 of Rickettsia bellii (strain RML369-C).